Consider the following 452-residue polypeptide: UDP-N-acetylmuramoylalanine--D-glutamate ligase (452 aa).

Residue 119 to 125 participates in ATP binding; sequence GSNGKTT.

Belongs to the MurCDEF family.

The protein resides in the cytoplasm. The enzyme catalyses UDP-N-acetyl-alpha-D-muramoyl-L-alanine + D-glutamate + ATP = UDP-N-acetyl-alpha-D-muramoyl-L-alanyl-D-glutamate + ADP + phosphate + H(+). Its pathway is cell wall biogenesis; peptidoglycan biosynthesis. Functionally, cell wall formation. Catalyzes the addition of glutamate to the nucleotide precursor UDP-N-acetylmuramoyl-L-alanine (UMA). This chain is UDP-N-acetylmuramoylalanine--D-glutamate ligase, found in Streptococcus pyogenes serotype M12 (strain MGAS9429).